Reading from the N-terminus, the 78-residue chain is Conotoxin Cl14.9 (78 aa).

Positions 1–22 are cleaved as a signal peptide; sequence MTAKATLLVLALVVMATSGVSS. Residues 23-47 constitute a propeptide that is removed on maturation; sequence ASVAGGPVVNSDTVSRSDPERLSTR. Residue Ile70 is modified to Isoleucine amide. The propeptide occupies 74-78; that stretch reads DITQQ.

In terms of processing, contains 2 disulfide bonds. In terms of tissue distribution, expressed by the venom duct.

It localises to the secreted. The sequence is that of Conotoxin Cl14.9 from Californiconus californicus (California cone).